We begin with the raw amino-acid sequence, 161 residues long: Nucleotide-binding protein XCV3791 (161 aa).

Belongs to the YajQ family.

Nucleotide-binding protein. The polypeptide is Nucleotide-binding protein XCV3791 (Xanthomonas euvesicatoria pv. vesicatoria (strain 85-10) (Xanthomonas campestris pv. vesicatoria)).